The following is a 58-amino-acid chain: UPF0509 protein YciZ (58 aa).

Belongs to the UPF0509 family.

The polypeptide is UPF0509 protein YciZ (Escherichia fergusonii (strain ATCC 35469 / DSM 13698 / CCUG 18766 / IAM 14443 / JCM 21226 / LMG 7866 / NBRC 102419 / NCTC 12128 / CDC 0568-73)).